A 421-amino-acid polypeptide reads, in one-letter code: MKVLILGSGVIGVTSAYYLAGAGHDVTVVDRQPEPALETSFANAGEVSPGYSSPWAGPGVPVKAVKWLLMKHGPLVIRPKLDPVMWVWLLKMLRNCTSARYAVNKSRMIPIAEYSRDCLRDLRRDIGIQYDERSQGTLQLFRHQAQLDGTGEDIAVLKQYGVPFEVLGREGCIAVEPALAGVKEKFAGGLRLPQDETGDCHMFTQALAKHAQALGVRFMFNTGIDRIVTDGARVSGVVTSAGVLQADAYVLALGSWSSRLVAPLGISLPVYPVKGYSITVPIKDASGAPESTVMDESYKVAITRLGNRIRVGGTAEISGFSSKLYDARRATLDHSLTDLFPRGGDLSKATFWSGLRPMTPDGPPVIGPTQYANLHLNTGHGTLGWTMSCGSGRVLADMLSGKKPEVDVSALTVDRYAHRFG.

3-17 (VLILGSGVIGVTSAY) serves as a coordination point for FAD.

It belongs to the DadA oxidoreductase family. It depends on FAD as a cofactor.

The catalysed reaction is a D-alpha-amino acid + A + H2O = a 2-oxocarboxylate + AH2 + NH4(+). Functionally, oxidative deamination of D-amino acids. The chain is D-amino acid dehydrogenase from Bradyrhizobium diazoefficiens (strain JCM 10833 / BCRC 13528 / IAM 13628 / NBRC 14792 / USDA 110).